The chain runs to 844 residues: Leucine--tRNA ligase (844 aa).

Positions 39-49 (PYPSGRIHMGH) match the 'HIGH' region motif. Positions 621 to 625 (KMSKS) match the 'KMSKS' region motif. Lys624 is a binding site for ATP.

This sequence belongs to the class-I aminoacyl-tRNA synthetase family.

The protein localises to the cytoplasm. The enzyme catalyses tRNA(Leu) + L-leucine + ATP = L-leucyl-tRNA(Leu) + AMP + diphosphate. The sequence is that of Leucine--tRNA ligase from Paracoccus denitrificans (strain Pd 1222).